Here is a 654-residue protein sequence, read N- to C-terminus: ATP-dependent rRNA helicase spb-4 (654 aa).

A Q motif motif is present at residues 17 to 45 (WDALTPPLAQWILDYLSSMGFTQPTPVQK). In terms of domain architecture, Helicase ATP-binding spans 48–249 (LELFRGNKDV…TVGLLYPHKI (202 aa)). 61 to 68 (AVTGSGKT) contributes to the ATP binding site. A DEAD box motif is present at residues 197-200 (DEAD). Residues 286–444 (AIVQLLEKLE…VTPDEVERVS (159 aa)) enclose the Helicase C-terminal domain. The stretch at 531–631 (REKKRQEELA…EERAAALAAN (101 aa)) forms a coiled coil. Positions 542-577 (WKEEKAKRAQEENTGDKRKKNEAWSGKAEQEETKLQ) are enriched in basic and acidic residues. The interval 542 to 654 (WKEEKAKRAQ…SDEEFGGFDD (113 aa)) is disordered. The span at 578 to 588 (RREKKRRKREA) shows a compositional bias: basic residues. The span at 589 to 625 (KKFSEMTEKEKEEHLKLEQMIEEVRKRNEAKAAEERA) shows a compositional bias: basic and acidic residues. Residues 644-654 (DSDEEFGGFDD) show a composition bias toward acidic residues.

It belongs to the DEAD box helicase family. DDX55/SPB4 subfamily. Component of pre-60S ribosomal complexes.

It localises to the nucleus. The protein resides in the nucleolus. The catalysed reaction is ATP + H2O = ADP + phosphate + H(+). ATP-binding RNA helicase involved in the biogenesis of 60S ribosomal subunits. Binds 90S pre-ribosomal particles and dissociates from pre-60S ribosomal particles after processing of 27SB pre-rRNA. Required for the normal formation of 18S rRNA through the processing of pre-rRNAs at sites A0, A1 and A2, and the normal formation of 25S and 5.8S rRNAs through the processing of pre-rRNAs at sites C1 and C2. In Neurospora crassa (strain ATCC 24698 / 74-OR23-1A / CBS 708.71 / DSM 1257 / FGSC 987), this protein is ATP-dependent rRNA helicase spb-4.